A 347-amino-acid polypeptide reads, in one-letter code: uncharacterized protein (347 aa).

The next 10 membrane-spanning stretches (helical) occupy residues 6 to 26 (GSAS…GFAT), 37 to 57 (FGWF…LLGA), 90 to 110 (FMLF…GALF), 114 to 134 (LGMS…IVMT), 140 to 160 (IFGV…IVVA), 182 to 202 (WLLS…AVLV), 217 to 237 (GALI…LSLS), 262 to 282 (LIYL…NLYG), 289 to 309 (SFLP…AYIT), and 317 to 337 (LIST…GALL).

The protein resides in the cell membrane. This is an uncharacterized protein from Bacillus subtilis (strain 168).